The following is a 163-amino-acid chain: MSQQEPDDSRNCIVAVTLDEESIGRSGPDIEHERAIAIYDLVEKNLFAPQGGGEGPYTLHIGITGNRLMFDIRREDGSPVMVHLLSLTPFRRIVKDYFMICDSYYQAIRTATPDKIEAIDMGRRGIHDEGSRTLQERLAGKVRIDFETARRLFTLISVLHWKG.

This sequence belongs to the UPF0262 family.

This is UPF0262 protein RPC_4416 from Rhodopseudomonas palustris (strain BisB18).